Consider the following 63-residue polypeptide: Large ribosomal subunit protein uL29 (63 aa).

This sequence belongs to the universal ribosomal protein uL29 family.

The chain is Large ribosomal subunit protein uL29 from Shewanella baltica (strain OS223).